We begin with the raw amino-acid sequence, 163 residues long: Crossover junction endodeoxyribonuclease RuvC (163 aa).

Residues Asp9, Glu76, and Asp148 contribute to the active site. Positions 9, 76, and 148 each coordinate Mg(2+).

Belongs to the RuvC family. In terms of assembly, homodimer which binds Holliday junction (HJ) DNA. The HJ becomes 2-fold symmetrical on binding to RuvC with unstacked arms; it has a different conformation from HJ DNA in complex with RuvA. In the full resolvosome a probable DNA-RuvA(4)-RuvB(12)-RuvC(2) complex forms which resolves the HJ. Mg(2+) serves as cofactor.

The protein resides in the cytoplasm. The catalysed reaction is Endonucleolytic cleavage at a junction such as a reciprocal single-stranded crossover between two homologous DNA duplexes (Holliday junction).. Its function is as follows. The RuvA-RuvB-RuvC complex processes Holliday junction (HJ) DNA during genetic recombination and DNA repair. Endonuclease that resolves HJ intermediates. Cleaves cruciform DNA by making single-stranded nicks across the HJ at symmetrical positions within the homologous arms, yielding a 5'-phosphate and a 3'-hydroxyl group; requires a central core of homology in the junction. The consensus cleavage sequence is 5'-(A/T)TT(C/G)-3'. Cleavage occurs on the 3'-side of the TT dinucleotide at the point of strand exchange. HJ branch migration catalyzed by RuvA-RuvB allows RuvC to scan DNA until it finds its consensus sequence, where it cleaves and resolves the cruciform DNA. This chain is Crossover junction endodeoxyribonuclease RuvC, found in Nostoc punctiforme (strain ATCC 29133 / PCC 73102).